The following is a 182-amino-acid chain: ATP-dependent protease subunit HslV (182 aa).

Threonine 12 is an active-site residue. Na(+)-binding residues include alanine 167, cysteine 170, and threonine 173.

Belongs to the peptidase T1B family. HslV subfamily. As to quaternary structure, a double ring-shaped homohexamer of HslV is capped on each side by a ring-shaped HslU homohexamer. The assembly of the HslU/HslV complex is dependent on binding of ATP.

Its subcellular location is the cytoplasm. The enzyme catalyses ATP-dependent cleavage of peptide bonds with broad specificity.. Allosterically activated by HslU binding. Protease subunit of a proteasome-like degradation complex believed to be a general protein degrading machinery. The sequence is that of ATP-dependent protease subunit HslV from Chlorobium chlorochromatii (strain CaD3).